An 839-amino-acid polypeptide reads, in one-letter code: MAQFDTEYQRLEASYSDSPPGEEDLLVHVAEGSKSPWHHIENLDLFFSRVYNLHQKNGFTCMLIGEIFELMQFLFVVAFTTFLVSCVDYDILFANKMVNHSLHPTEPVKVTLPDAFLPAQVCSARIQENGSLITILVIAGVFWIHRLIKFIYNICCYWEIHSFYLHALRIPMSALPYCTWQEVQARIVQTQKEHQICIHKRELTELDIYHRILRFQNYMVALVNKSLLPLRFRLPGLGEVVFFTRGLKYNFELILFWGPGSLFLNEWSLKAEYKRGGQRLELAQRLSNRILWIGIANFLLCPLILIWQILYAFFSYAEVLKREPGALGARCWSLYGRCYLRHFNELEHELQSRLNRGYKPASKYMNCFLSPLLTLLAKNGAFFAGSILAVLIALTIYDEDVLAVEHVLTTVTLLGVTVTVCRSFIPDQHMVFCPEQLLRVILAHIHYMPDHWQGNAHRSQTRDEFAQLFQYKAVFILEELLSPIVTPLILIFCLRPRALEIIDFFRNFTVEVVGVGDTCSFAQMDVRQHGHPQWLSGGQTEASVYQQAEDGKTELSLMHFAITNPGWQPPRESTAFLGFLKEQVQRDGAAAGLAQGGLLPENALFTSIQSLQSESEPLSLIANVVAGSSCRGPPLSRDLQGSRHRADVASALRSFSPLQPGQAPQGRVPSTMTGSGVDARTASSGSSVWEGQLQSLVLSEYASTEMSLHALYMHQLHKQQTQAEPERHVWHRRESDESGESAPEEGGEGARAPQPIPRSASYPCATPRPGAPETTALHGGFQRRYGGITDPGTVPRAPSHFSRLPLGGWAEDGQPASRHPEPVPEEGSEDELPPQVHKV.

N-acetylalanine is present on Ala-2. Residues 2–61 are Cytoplasmic-facing; sequence AQFDTEYQRLEASYSDSPPGEEDLLVHVAEGSKSPWHHIENLDLFFSRVYNLHQKNGFTC. A Tyrosine-based sorting signal motif is present at residues 8–11; it reads YQRL. Ser-14, Ser-16, and Ser-18 each carry phosphoserine. A helical transmembrane segment spans residues 62 to 84; that stretch reads MLIGEIFELMQFLFVVAFTTFLV. Topologically, residues 85–128 are lumenal; the sequence is SCVDYDILFANKMVNHSLHPTEPVKVTLPDAFLPAQVCSARIQE. Asn-99 is a glycosylation site (N-linked (GlcNAc...) asparagine). A helical membrane pass occupies residues 129 to 154; that stretch reads NGSLITILVIAGVFWIHRLIKFIYNI. Residues 155-290 are Cytoplasmic-facing; sequence CCYWEIHSFY…ELAQRLSNRI (136 aa). An intramembrane segment occupies 291–301; that stretch reads LWIGIANFLLC. Topologically, residues 302–319 are cytoplasmic; sequence PLILIWQILYAFFSYAEV. Residues 320-328 lie within the membrane without spanning it; sequence LKREPGALG. Topologically, residues 329–371 are cytoplasmic; the sequence is ARCWSLYGRCYLRHFNELEHELQSRLNRGYKPASKYMNCFLSP. The chain crosses the membrane as a helical span at residues 372–397; that stretch reads LLTLLAKNGAFFAGSILAVLIALTIY. The Lumenal portion of the chain corresponds to 398 to 406; that stretch reads DEDVLAVEH. A helical membrane pass occupies residues 407 to 424; it reads VLTTVTLLGVTVTVCRSF. The Cytoplasmic segment spans residues 425–470; it reads IPDQHMVFCPEQLLRVILAHIHYMPDHWQGNAHRSQTRDEFAQLFQ. The stretch at 471 to 480 is an intramembrane region; sequence YKAVFILEEL. Topologically, residues 481 to 483 are cytoplasmic; sequence LSP. An intramembrane segment occupies 484–492; it reads IVTPLILIF. The Cytoplasmic portion of the chain corresponds to 493-839; sequence CLRPRALEII…DELPPQVHKV (347 aa). Phosphoserine occurs at positions 656, 735, 738, 741, and 828. Disordered stretches follow at residues 656–689 and 717–839; these read SPLQ…SSVW and HKQQ…VHKV. Residues 724 to 736 are compositionally biased toward basic and acidic residues; the sequence is EPERHVWHRRESD. 2 stretches are compositionally biased toward acidic residues: residues 737–747 and 823–832; these read ESGESAPEEGG and VPEEGSEDEL.

Belongs to the ATG9 family. In terms of assembly, homotrimer; forms a homotrimer with a central pore that forms a path between the two membrane leaflets. Interacts (via cytoplasmic its C-terminus) with ATG2A. Interacts with SUPT20H. Interacts (via the tyrosine-based sorting signal motif) with AP4M1; promoting association with the AP-4 complex. Interacts with ARFIP1 and ARFIP2. Interacts with PI4K2A and PI4KB. Interacts with ATG4A; the interaction is direct and promotes ATG9A trafficking. Post-translationally, ufmylated in a DDRGK1 dependent manner.

The protein resides in the preautophagosomal structure membrane. It is found in the cytoplasmic vesicle. Its subcellular location is the autophagosome membrane. It localises to the golgi apparatus. The protein localises to the trans-Golgi network membrane. The protein resides in the late endosome membrane. It is found in the recycling endosome membrane. Its subcellular location is the endoplasmic reticulum membrane. It localises to the mitochondrion membrane. The enzyme catalyses a 1,2-diacyl-sn-glycero-3-phosphocholine(in) = a 1,2-diacyl-sn-glycero-3-phosphocholine(out). It carries out the reaction a 1,2-diacyl-sn-glycero-3-phospho-L-serine(in) = a 1,2-diacyl-sn-glycero-3-phospho-L-serine(out). It catalyses the reaction a 1,2-diacyl-sn-glycero-3-phosphoethanolamine(in) = a 1,2-diacyl-sn-glycero-3-phosphoethanolamine(out). Its function is as follows. Phospholipid scramblase involved in autophagy by mediating autophagosomal membrane expansion. Cycles between the preautophagosomal structure/phagophore assembly site (PAS) and the cytoplasmic vesicle pool and supplies membrane for the growing autophagosome. Lipid scramblase activity plays a key role in preautophagosomal structure/phagophore assembly by distributing the phospholipids that arrive through ATG2 (ATG2A or ATG2B) from the cytoplasmic to the luminal leaflet of the bilayer, thereby driving autophagosomal membrane expansion. Also required to supply phosphatidylinositol 4-phosphate to the autophagosome initiation site by recruiting the phosphatidylinositol 4-kinase beta (PI4KB) in a process dependent on ARFIP2, but not ARFIP1. In addition to autophagy, also plays a role in necrotic cell death. In Rattus norvegicus (Rat), this protein is Autophagy-related protein 9A.